The chain runs to 1249 residues: Cilia- and flagella-associated protein 57 (1249 aa).

WD repeat units follow at residues 105–148, 195–233, 335–374, 386–425, 427–469, 471–506, 509–548, and 635–674; these read FQVQ…AIIK, GESSNYLAHAWVSEDRVIVGTDTGKLFLFESGDQRWETS, SDKQDVLCLCFSPSEETLIASTNKNQLYSITMSLTEISKG, LHSASITGLDTCIRKPLIATCSLDRSVRIWNYESNTLELY, EYQE…KEYS, RGCKECSFSNGGHLFAAVNGNVIHIFTTTSLENINI, GHTGKIRSLVWNLDDSKLVSAGTDGAVYEWNLSTGKRETE, and AHAGPVMKMLLTFDDQFLLTVGEDGCLFTWKVFDKDGRGI. Coiled coils occupy residues 690–1056 and 1094–1165; these read KTDM…KTDL and SDLQ…SALK.

It belongs to the CFAP57 family. As to quaternary structure, may form homodimers. Associates with components of the nexin-dynein regulatory complex (N-DRC) and the CFAP184:CFAP263 complex. In terms of tissue distribution, predominanly expressed in testis, lung and skin. Weak expression in brain and kidney.

It localises to the cytoplasm. Its subcellular location is the cytoskeleton. The protein localises to the cilium axoneme. Functionally, associates with components of the nexin-dynein regulatory complex (N-DRC), a key regulator of ciliary/flagellar motility, and might act as an inner dynein arm (IDA) hub or linkage. This chain is Cilia- and flagella-associated protein 57, found in Mus musculus (Mouse).